The primary structure comprises 419 residues: Tyrosine--tRNA ligase 2 (419 aa).

An L-tyrosine-binding site is contributed by Tyr-34. The short motif at 39–48 (PTGDSMHIGH) is the 'HIGH' region element. L-tyrosine is bound by residues Tyr-168 and Gln-172. The 'KMSKS' region signature appears at 230 to 234 (KFGKS). Position 233 (Lys-233) interacts with ATP. In terms of domain architecture, S4 RNA-binding spans 352-418 (KNIVEWLVDL…GKKNYSLVKL (67 aa)).

This sequence belongs to the class-I aminoacyl-tRNA synthetase family. TyrS type 1 subfamily. In terms of assembly, homodimer.

Its subcellular location is the cytoplasm. It carries out the reaction tRNA(Tyr) + L-tyrosine + ATP = L-tyrosyl-tRNA(Tyr) + AMP + diphosphate + H(+). In terms of biological role, catalyzes the attachment of tyrosine to tRNA(Tyr) in a two-step reaction: tyrosine is first activated by ATP to form Tyr-AMP and then transferred to the acceptor end of tRNA(Tyr). In Bacillus thuringiensis subsp. konkukian (strain 97-27), this protein is Tyrosine--tRNA ligase 2.